Consider the following 307-residue polypeptide: 4-hydroxybenzoate geranyltransferase 1 (307 aa).

8 helical membrane passes run 38–58 (PIGS…AADL), 62–82 (PKML…GCTI), 120–140 (LFIG…LAIV), 154–174 (ITYW…LLGS), 179–199 (GSVV…WTLV), 230–250 (MWIS…GLIL), 252–272 (IGLP…WQIF), and 286–306 (FVSN…GRLF).

The protein belongs to the UbiA prenyltransferase family. Mg(2+) serves as cofactor. Expressed only in roots.

Its subcellular location is the endoplasmic reticulum membrane. The catalysed reaction is 4-hydroxybenzoate + (2E)-geranyl diphosphate = 3-geranyl-4-hydroxybenzoate + diphosphate. Prenyltransferase involved in the biosynthesis of shikonin, a naphthoquinone secondary metabolite. Could accept only geranyl diphosphate and not dimethylallyl diphosphate, farnesyl diphosphate, or geranylgeranyl diphosphate as substrate. This chain is 4-hydroxybenzoate geranyltransferase 1 (PGT-1), found in Lithospermum erythrorhizon (Purple gromwell).